Reading from the N-terminus, the 249-residue chain is tRNA pseudouridine synthase A (249 aa).

Aspartate 53 acts as the Nucleophile in catalysis. Residue tyrosine 111 participates in substrate binding.

This sequence belongs to the tRNA pseudouridine synthase TruA family. In terms of assembly, homodimer.

The enzyme catalyses uridine(38/39/40) in tRNA = pseudouridine(38/39/40) in tRNA. Its function is as follows. Formation of pseudouridine at positions 38, 39 and 40 in the anticodon stem and loop of transfer RNAs. In Streptococcus pneumoniae (strain 70585), this protein is tRNA pseudouridine synthase A.